The chain runs to 489 residues: Hydantoin permease (489 aa).

12 consecutive transmembrane segments (helical) span residues 30-50 (FSLA…IAAG), 58-78 (VWQV…LLFF), 104-124 (LIPI…QTWL), 144-164 (LWIV…ITFI), 167-187 (MNVF…YLML), 207-227 (MPFS…VVSI), 258-278 (LGMV…MVLV), 299-321 (AILF…NLLS), 339-359 (GVIV…AGVL), 362-382 (FLNL…SDYF), 405-424 (RGVN…VSFL), and 428-445 (LMFV…IPAM). Na(+)-binding residues include Ala38 and Ile41. Residue Gln121 coordinates substrate. A substrate-binding site is contributed by Gly219. 3 residues coordinate Na(+): Ala309, Ser312, and Thr313. Residue Asn318 coordinates substrate. The interval 468–489 (PIGPVAPADESATANTKEQNQR) is disordered. A compositionally biased stretch (polar residues) spans 479–489 (ATANTKEQNQR).

Belongs to the purine-cytosine permease (2.A.39) family.

It localises to the membrane. With respect to regulation, inhibited by dinitrophenol, 5-(2-naphthylmethyl)-D-hydantoin (D-NMH), 5-(2-naphthylmethyl)-L-hydantoin (L-NMH), 5-bromovinylhydantoin (BVH) and 5-indolylmethyl-L-hydantoin (L-IMH). The affinity of benzyl-hydantoin is increased over 10-fold in the presence of 15 mM of sodium. Its function is as follows. Nucleobase-proton symporter that mediates the sodium-dependent binding and uptake of 5-aryl-substituted hydantoin compounds. 5-indolyl methyl hydantoin and 5-benzyl hydantoin are the preferred substrates, with selectivity for a hydrophobic substituent in position 5 of hydantoin and for the L isomer over the D isomer. The protein is Hydantoin permease of Microbacterium maritypicum (Microbacterium liquefaciens).